A 610-amino-acid polypeptide reads, in one-letter code: Elongation factor 4 (610 aa).

Positions 11 to 193 (EKIRNFSIIA…QIVEKVPAPT (183 aa)) constitute a tr-type G domain. GTP-binding positions include 23–28 (DHGKST) and 140–143 (NKID).

It belongs to the TRAFAC class translation factor GTPase superfamily. Classic translation factor GTPase family. LepA subfamily.

The protein resides in the cell membrane. It catalyses the reaction GTP + H2O = GDP + phosphate + H(+). In terms of biological role, required for accurate and efficient protein synthesis under certain stress conditions. May act as a fidelity factor of the translation reaction, by catalyzing a one-codon backward translocation of tRNAs on improperly translocated ribosomes. Back-translocation proceeds from a post-translocation (POST) complex to a pre-translocation (PRE) complex, thus giving elongation factor G a second chance to translocate the tRNAs correctly. Binds to ribosomes in a GTP-dependent manner. This Streptococcus suis (strain 98HAH33) protein is Elongation factor 4.